Here is a 322-residue protein sequence, read N- to C-terminus: CXXC-type zinc finger protein 5 (322 aa).

Gly residues predominate over residues 1–10 (MSSLGGGSQD). Residues 1 to 100 (MSSLGGGSQD…SGGGSMMGGE (100 aa)) form a disordered region. 2 stretches are compositionally biased toward low complexity: residues 11-20 (AGGSSSSSTN) and 28-52 (SGPK…VADD). A Phosphothreonine modification is found at T53. Over residues 87-97 (SSGGSGGGSMM) the composition is skewed to gly residues. Residues 256–297 (GKKKRKRCGMCAPCRRRINCEQCSSCRNRKTGHQICKFRKCE) form a CXXC-type zinc finger. The Nuclear localization signal motif lies at 257–262 (KKKRKR). Positions 263, 266, 269, 275, 278, 281, 291, and 296 each coordinate Zn(2+).

Interacts with DVL1. Interacts with RBPJ.

The protein localises to the nucleus. It localises to the cytoplasm. Its function is as follows. May indirectly participate in activation of the NF-kappa-B and MAPK pathways. Acts as a mediator of BMP4-mediated modulation of canonical Wnt signaling activity in neural stem cells. Required for DNA damage-induced ATM phosphorylation, p53 activation and cell cycle arrest. Involved in myelopoiesis. Transcription factor. Binds to the oxygen responsive element of COX4I2 and represses its transcription under hypoxia conditions (4% oxygen), as well as normoxia conditions (20% oxygen). May repress COX4I2 transactivation induced by CHCHD2 and RBPJ. Binds preferentially to DNA containing cytidine-phosphate-guanosine (CpG) dinucleotides over CpH (H=A, T, and C), hemimethylated-CpG and hemimethylated-hydroxymethyl-CpG. This is CXXC-type zinc finger protein 5 (CXXC5) from Homo sapiens (Human).